The primary structure comprises 1205 residues: Caskin-2 (1205 aa).

ANK repeat units follow at residues 48–77 (DGFSALHHAALSGNSELLLLLLEMQASVDI), 81–110 (NGMRPLHYAAWQGQPEPVRLLLRASASVNA), 114–143 (DGQIPLHLAAQYGHYEVSETLLQHQSNPCH), 147–176 (GKKTPLDLACEFGRVKVVQLLLNSHLCVSL), 188–217 (NFTTPLHLAAKNGHLEVIRLLLKLGIEINK), and 220–249 (KMGTALHEAALCGKTEVVKLLIENGVDVNI). Residues 281–347 (SGILKVRALK…PPSIVEVISK (67 aa)) enclose the SH3 domain. Polar residues-rich tracts occupy residues 377-388 (SPGSQLGINPDT) and 398-411 (GSESSVRSAGSGQS). Residues 377-411 (SPGSQLGINPDTSVAGDRHSVGSESSVRSAGSGQS) form a disordered region. SAM domains follow at residues 468–531 (KDAE…LIVA) and 537–601 (QIPV…LLDL). Over residues 666–687 (RRSFSQESISSRSQGSGHSQES) the composition is skewed to low complexity. Disordered stretches follow at residues 666 to 689 (RRSFSQESISSRSQGSGHSQESAS), 784 to 964 (RPGR…QRHL), 984 to 1054 (QIAA…SQEP), and 1132 to 1155 (SEASSREQTCIPQQSISNSDKGPP). Positions 823–840 (SSMSSAEGQSPEGQSSVK) are enriched in polar residues. Over residues 908–919 (ISSQHSSSESIP) the composition is skewed to low complexity. Over residues 942 to 959 (DATSELSPTQESQLQSAE) the composition is skewed to polar residues. The segment covering 1009–1037 (KNEEHDFNLTESDTVKRRPKVKEKEEESP) has biased composition (basic and acidic residues). Polar residues-rich tracts occupy residues 1042 to 1054 (ANNSPSLIPSQEP) and 1137 to 1155 (REQTCIPQQSISNSDKGPP).

This chain is Caskin-2 (caskin2), found in Xenopus laevis (African clawed frog).